The primary structure comprises 486 residues: Malonate-semialdehyde dehydrogenase (486 aa).

Residues Phe-154, Lys-178, Glu-181, Arg-182, and Ser-231 each coordinate NAD(+). Catalysis depends on Cys-286, which acts as the Nucleophile. Glu-386 contributes to the NAD(+) binding site.

This sequence belongs to the aldehyde dehydrogenase family. IolA subfamily. Homotetramer.

The catalysed reaction is 3-oxopropanoate + NAD(+) + CoA + H2O = hydrogencarbonate + acetyl-CoA + NADH + H(+). It carries out the reaction 2-methyl-3-oxopropanoate + NAD(+) + CoA + H2O = propanoyl-CoA + hydrogencarbonate + NADH + H(+). The protein operates within polyol metabolism; myo-inositol degradation into acetyl-CoA; acetyl-CoA from myo-inositol: step 7/7. Catalyzes the oxidation of malonate semialdehyde (MSA) and methylmalonate semialdehyde (MMSA) into acetyl-CoA and propanoyl-CoA, respectively. Is involved in a myo-inositol catabolic pathway. Bicarbonate, and not CO2, is the end-product of the enzymatic reaction. The chain is Malonate-semialdehyde dehydrogenase from Bacillus cereus (strain B4264).